The following is a 121-amino-acid chain: Large ribosomal subunit protein bL19 (121 aa).

The protein belongs to the bacterial ribosomal protein bL19 family.

Its function is as follows. This protein is located at the 30S-50S ribosomal subunit interface and may play a role in the structure and function of the aminoacyl-tRNA binding site. This Chlorobaculum tepidum (strain ATCC 49652 / DSM 12025 / NBRC 103806 / TLS) (Chlorobium tepidum) protein is Large ribosomal subunit protein bL19.